A 304-amino-acid chain; its full sequence is Dihydroorotate dehydrogenase B (NAD(+)), catalytic subunit (304 aa).

FMN contacts are provided by residues Ser21 and 45-46; that span reads KA. Residues Lys45 and 69–73 each bind substrate; that span reads NAIGL. The FMN site is built by Asn99 and Asn127. Asn127 is a binding site for substrate. Cys130 (nucleophile) is an active-site residue. Positions 165 and 191 each coordinate FMN. 192-193 serves as a coordination point for substrate; it reads NT. Residues Gly217, 243–244, and 265–266 contribute to the FMN site; these read GG and GT.

It belongs to the dihydroorotate dehydrogenase family. Type 1 subfamily. In terms of assembly, heterotetramer of 2 PyrK and 2 PyrD type B subunits. It depends on FMN as a cofactor.

Its subcellular location is the cytoplasm. It catalyses the reaction (S)-dihydroorotate + NAD(+) = orotate + NADH + H(+). Its pathway is pyrimidine metabolism; UMP biosynthesis via de novo pathway; orotate from (S)-dihydroorotate (NAD(+) route): step 1/1. In terms of biological role, catalyzes the conversion of dihydroorotate to orotate with NAD(+) as electron acceptor. In Listeria monocytogenes serotype 4a (strain HCC23), this protein is Dihydroorotate dehydrogenase B (NAD(+)), catalytic subunit (pyrD).